A 366-amino-acid polypeptide reads, in one-letter code: Outer membrane porin C 2 (366 aa).

Residues 1–21 (MKLKIVAVVVTGLLAANVAHA) form the signal peptide.

It belongs to the Gram-negative porin family. As to quaternary structure, homotrimer. Forms mixed heterotrimers with OmpF and with PhoE; other mixed heterotrimers are also probable.

Its subcellular location is the cell outer membrane. Forms pores that allow passive diffusion of small molecules across the outer membrane. Plays a role in virulence. This is Outer membrane porin C 2 from Shigella flexneri serotype 5a (strain M90T).